The sequence spans 311 residues: Ornithine carbamoyltransferase (311 aa).

Residues 52-55 (STRT), glutamine 79, arginine 103, and 129-132 (HPVQ) each bind carbamoyl phosphate. Residues asparagine 167, aspartate 226, and 230–231 (SM) each bind L-ornithine. Carbamoyl phosphate-binding positions include 266–267 (CL) and arginine 294.

It belongs to the aspartate/ornithine carbamoyltransferase superfamily. OTCase family.

It is found in the cytoplasm. The enzyme catalyses carbamoyl phosphate + L-ornithine = L-citrulline + phosphate + H(+). Its pathway is amino-acid biosynthesis; L-arginine biosynthesis; L-arginine from L-ornithine and carbamoyl phosphate: step 1/3. Its function is as follows. Reversibly catalyzes the transfer of the carbamoyl group from carbamoyl phosphate (CP) to the N(epsilon) atom of ornithine (ORN) to produce L-citrulline. This is Ornithine carbamoyltransferase from Sorangium cellulosum (strain So ce56) (Polyangium cellulosum (strain So ce56)).